A 223-amino-acid chain; its full sequence is MVSFTSLLAGVAAISGVLAAPAAEVESVAVEKRQTIQPGTGYNNGYFYSYWNDGHGGVTYTNGPGGQFSVNWSNSGNFVGGKGWQPGTKNKVINFSGSYNPNGNSYLSVYGWSRNPLIEYYIVENFGTYNPSTGATKLGEVTSDGSVYDIYRTQRVNQPSIIGTATFYQYWSVRRNHRSSGSVNTANHFNAWAQQGLTLGTMDYQIVAVEGYFSSGSASITVS.

The signal sequence occupies residues 1 to 19 (MVSFTSLLAGVAAISGVLA). The propeptide occupies 20–33 (APAAEVESVAVEKR). Residue Q34 is modified to Pyrrolidone carboxylic acid. The 189-residue stretch at 34 to 222 (QTIQPGTGYN…FSSGSASITV (189 aa)) folds into the GH11 domain. N-linked (GlcNAc...) asparagine glycans are attached at residues N71 and N94. 2 residues coordinate substrate: Y106 and Y110. The Nucleophile role is filled by E119. Residues Y121, R155, P159, Q169, and Y204 each contribute to the substrate site. Residue E210 is the Proton donor of the active site.

It belongs to the glycosyl hydrolase 11 (cellulase G) family.

It is found in the secreted. It catalyses the reaction Endohydrolysis of (1-&gt;4)-beta-D-xylosidic linkages in xylans.. The protein operates within glycan degradation; xylan degradation. Glycoside hydrolase involved in the hydrolysis of xylan, a major plant cell wall hemicellulose made up of 1,4-beta-linked D-xylopyranose residues. Catalyzes the endohydrolysis of the main-chain 1,4-beta-glycosidic bonds connecting the xylose subunits yielding various xylooligosaccharides and xylose. The catalysis proceeds by a double-displacement reaction mechanism with a putative covalent glycosyl-enzyme intermediate, with retention of the anomeric configuration. Produces xylobiose and xylose as the main degradation products. This Hypocrea jecorina (strain ATCC 56765 / BCRC 32924 / NRRL 11460 / Rut C-30) (Trichoderma reesei) protein is Endo-1,4-beta-xylanase 2.